The following is a 155-amino-acid chain: Regulatory protein RecX (155 aa).

The protein belongs to the RecX family.

It is found in the cytoplasm. Modulates RecA activity. The polypeptide is Regulatory protein RecX (Pseudomonas savastanoi pv. phaseolicola (strain 1448A / Race 6) (Pseudomonas syringae pv. phaseolicola (strain 1448A / Race 6))).